The following is a 174-amino-acid chain: Ribosome rescue factor SmrB (174 aa).

Residues 96–171 enclose the Smr domain; that stretch reads LDLHGLTQQQ…GDAAILVLIE (76 aa).

Belongs to the SmrB family. In terms of assembly, associates with collided ribosomes, but not with correctly translating polysomes.

In terms of biological role, acts as a ribosome collision sensor. Detects stalled/collided disomes (pairs of ribosomes where the leading ribosome is stalled and a second ribosome has collided with it) and endonucleolytically cleaves mRNA at the 5' boundary of the stalled ribosome. Stalled/collided disomes form a new interface (primarily via the 30S subunits) that binds SmrB. Cleaved mRNA becomes available for tmRNA ligation, leading to ribosomal subunit dissociation and rescue of stalled ribosomes. The sequence is that of Ribosome rescue factor SmrB from Tolumonas auensis (strain DSM 9187 / NBRC 110442 / TA 4).